Reading from the N-terminus, the 409-residue chain is MARAKFERTKPHVNIGTIGHVDHGKTTLTAAITMTLAAQGKAKARNYEDIDAAPEEKARGITINTAHVEYETDSRHYAHVDCPGHADYVKNMITGAAQMDGGILVVSAADGPMPQTREHILLAKQVGVPNLVVFLNKQDMVDDEELLELVELEVRELLTEYGFDGDNIPIVAGSALQAVEALKANPKIAKGDNEWTDKILALMDEVDAYIPEPEREIDKPFLMAVEDVFSISGRGTVATGRIERGKVKVGETVEIVGIRATSSTTVTGVEMFQKTLEEGLAGDNVGLLLRGVKKEDIERGMVIAKPGSITPHTQFEGEVYVLTKEEGGRHTPFFKNYKPQFYVRTTDVTGSIVDYTSDEGETVEMVMPGDRIKMTVELINPIAIEQGMRFAIREGGRTIGAGVVSKILK.

In terms of domain architecture, tr-type G spans 10–214 (KPHVNIGTIG…EVDAYIPEPE (205 aa)). The tract at residues 19–26 (GHVDHGKT) is G1. 19–26 (GHVDHGKT) serves as a coordination point for GTP. Position 26 (Thr-26) interacts with Mg(2+). The tract at residues 60–64 (GITIN) is G2. Residues 81 to 84 (DCPG) form a G3 region. Residues 81–85 (DCPGH) and 136–139 (NKQD) each bind GTP. The G4 stretch occupies residues 136-139 (NKQD). A G5 region spans residues 174–176 (SAL).

Belongs to the TRAFAC class translation factor GTPase superfamily. Classic translation factor GTPase family. EF-Tu/EF-1A subfamily. As to quaternary structure, monomer.

It is found in the cytoplasm. The enzyme catalyses GTP + H2O = GDP + phosphate + H(+). Functionally, GTP hydrolase that promotes the GTP-dependent binding of aminoacyl-tRNA to the A-site of ribosomes during protein biosynthesis. This chain is Elongation factor Tu, found in Rippkaea orientalis (strain PCC 8801 / RF-1) (Cyanothece sp. (strain PCC 8801)).